The sequence spans 285 residues: 4,4'-diapophytoene synthase (285 aa).

(2E,6E)-farnesyl diphosphate-binding positions include 18–21 (YSKS), Y41, and R45. 2 residues coordinate Mg(2+): D48 and D52. (2E,6E)-farnesyl diphosphate is bound at residue Q163. N166 lines the Mg(2+) pocket. R169 is a binding site for (2E,6E)-farnesyl diphosphate. A Mg(2+)-binding site is contributed by D170. A (2E,6E)-farnesyl diphosphate-binding site is contributed by Y247.

The protein belongs to the phytoene/squalene synthase family. CrtM subfamily. Requires Mg(2+) as cofactor.

It carries out the reaction 2 (2E,6E)-farnesyl diphosphate = 15-cis-4,4'-diapophytoene + 2 diphosphate. It participates in carotenoid biosynthesis; staphyloxanthin biosynthesis; staphyloxanthin from farnesyl diphosphate: step 1/5. Its function is as follows. Involved in the biosynthesis of the yellow-orange carotenoid staphyloxanthin, which plays a role in the virulence via its protective function against oxidative stress. Catalyzes the head-to-head condensation of two molecules of farnesyl diphosphate (FPP) into the colorless C(30) carotenoid 4,4'-diapophytoene (dehydrosqualene). The polypeptide is 4,4'-diapophytoene synthase (crtM) (Staphylococcus haemolyticus (strain JCSC1435)).